The sequence spans 389 residues: tRNA(Met) cytidine acetate ligase (389 aa).

Residues 8 to 21 (IAEF…HEYL), G97, N153, and R176 contribute to the ATP site.

This sequence belongs to the TmcAL family.

Its subcellular location is the cytoplasm. It catalyses the reaction cytidine(34) in elongator tRNA(Met) + acetate + ATP = N(4)-acetylcytidine(34) in elongator tRNA(Met) + AMP + diphosphate. Catalyzes the formation of N(4)-acetylcytidine (ac(4)C) at the wobble position of elongator tRNA(Met), using acetate and ATP as substrates. First activates an acetate ion to form acetyladenylate (Ac-AMP) and then transfers the acetyl group to tRNA to form ac(4)C34. The protein is tRNA(Met) cytidine acetate ligase of Lactococcus lactis subsp. cremoris (strain SK11).